The sequence spans 229 residues: Potassium/proton antiporter CemA (229 aa).

Helical transmembrane passes span Ala-6–Cys-26, Ile-107–Gly-127, Phe-152–Leu-172, and Ile-189–Ile-209.

Belongs to the CemA family.

It localises to the plastid. The protein localises to the chloroplast inner membrane. The enzyme catalyses K(+)(in) + H(+)(out) = K(+)(out) + H(+)(in). Its function is as follows. Contributes to K(+)/H(+) antiport activity by supporting proton efflux to control proton extrusion and homeostasis in chloroplasts in a light-dependent manner to modulate photosynthesis. Prevents excessive induction of non-photochemical quenching (NPQ) under continuous-light conditions. Indirectly promotes efficient inorganic carbon uptake into chloroplasts. This chain is Potassium/proton antiporter CemA, found in Aethionema grandiflorum (Persian stone-cress).